The primary structure comprises 320 residues: Protein EI24 homolog (320 aa).

The next 3 helical transmembrane spans lie at 41–61, 94–114, and 175–195; these read QCFL…KWFI, GLLQ…SFIL, and ILLL…PYIG. Asn217 is a glycosylation site (N-linked (GlcNAc...) asparagine). 3 consecutive transmembrane segments (helical) span residues 227-247, 248-268, and 292-312; these read LDFF…CVLA, IFFL…PLFV, and LGKL…LSIF.

Belongs to the EI24 (TC 9.B.7) family.

The protein localises to the membrane. In Arabidopsis thaliana (Mouse-ear cress), this protein is Protein EI24 homolog.